We begin with the raw amino-acid sequence, 187 residues long: dTTP/UTP pyrophosphatase (187 aa).

Asp-68 functions as the Proton acceptor in the catalytic mechanism.

The protein belongs to the Maf family. YhdE subfamily. The cofactor is a divalent metal cation.

Its subcellular location is the cytoplasm. The enzyme catalyses dTTP + H2O = dTMP + diphosphate + H(+). It catalyses the reaction UTP + H2O = UMP + diphosphate + H(+). Nucleoside triphosphate pyrophosphatase that hydrolyzes dTTP and UTP. May have a dual role in cell division arrest and in preventing the incorporation of modified nucleotides into cellular nucleic acids. The protein is dTTP/UTP pyrophosphatase of Thermus thermophilus (strain ATCC BAA-163 / DSM 7039 / HB27).